We begin with the raw amino-acid sequence, 238 residues long: Ribonuclease PH (238 aa).

Residues Arg86 and 124-126 (GTR) each bind phosphate.

Belongs to the RNase PH family. As to quaternary structure, homohexameric ring arranged as a trimer of dimers.

The catalysed reaction is tRNA(n+1) + phosphate = tRNA(n) + a ribonucleoside 5'-diphosphate. Its function is as follows. Phosphorolytic 3'-5' exoribonuclease that plays an important role in tRNA 3'-end maturation. Removes nucleotide residues following the 3'-CCA terminus of tRNAs; can also add nucleotides to the ends of RNA molecules by using nucleoside diphosphates as substrates, but this may not be physiologically important. Probably plays a role in initiation of 16S rRNA degradation (leading to ribosome degradation) during starvation. In Halorhodospira halophila (strain DSM 244 / SL1) (Ectothiorhodospira halophila (strain DSM 244 / SL1)), this protein is Ribonuclease PH.